We begin with the raw amino-acid sequence, 419 residues long: MPRAPALLTNDARHQFTCCLCLHVRTGTIIFGITQIIIQLVFISFLFLMTFNPRLIPEDNHGNTDPSEDKIRFYVFSTLFRLVPAVSDIHESLTLPSPGTRNVNGNKLYLGHNVESETNFNYDIPPGYKDDVLVDVNNMSPSLVSYTQKNERGSHEVKIKHFSPYIAVCVTTFSLAFCCFMVHGAITKQPTHLLPFFFIQVFDLIICLIHILGFMSSTSDLRLMIHTKTGPIYIKSTGFTFIILSISCMMLAFKAYCLGMVWDCYKYLMLNRRGNLLDDWYSDQWGHLSTFWSLLRAGRNRGNNSIGNSGSPNEPNTRPRPEPITYDPANDLPKYEDILKIPANAYAPPPYYCSNINGNVNTTEASAVTTNTSNSATAANTTTTTTNTGTTTSVISTLTTTNKDDTQINSAPSNAHSSC.

The Cytoplasmic segment spans residues 1–28 (MPRAPALLTNDARHQFTCCLCLHVRTGT). Residues 29-49 (IIFGITQIIIQLVFISFLFLM) traverse the membrane as a helical segment. Over 50 to 165 (TFNPRLIPED…EVKIKHFSPY (116 aa)) the chain is Extracellular. The helical transmembrane segment at 166-186 (IAVCVTTFSLAFCCFMVHGAI) threads the bilayer. At 187–193 (TKQPTHL) the chain is on the cytoplasmic side. The helical transmembrane segment at 194–214 (LPFFFIQVFDLIICLIHILGF) threads the bilayer. The Extracellular segment spans residues 215–240 (MSSTSDLRLMIHTKTGPIYIKSTGFT). The chain crosses the membrane as a helical span at residues 241–261 (FIILSISCMMLAFKAYCLGMV). At 262 to 419 (WDCYKYLMLN…SAPSNAHSSC (158 aa)) the chain is on the cytoplasmic side. Over residues 303–316 (NNSIGNSGSPNEPN) the composition is skewed to low complexity. The interval 303–328 (NNSIGNSGSPNEPNTRPRPEPITYDP) is disordered.

In terms of assembly, interacts (via N-terminal extracellular domain) with human C2a. Phosphorylated on tyrosine residues.

It localises to the cell membrane. Cell surface receptor that binds to human complement C2a protein. This results in inhibition of the classical and lectin pathways of complement activation, probably due to interference with binding of C2a to C4b and interference with cleavage by C1 or MASP2 such that C3 convertase cannot be formed. This infers resistance to complement-mediated cell lysis, allowing parasite survival and infection. The chain is Tetraspanning orphan receptor from Schistosoma mansoni (Blood fluke).